Consider the following 271-residue polypeptide: Ribosomal RNA small subunit methyltransferase A (271 aa).

Residues Asn-19, Leu-21, Gly-46, Glu-67, Asp-92, and Asn-114 each contribute to the S-adenosyl-L-methionine site.

This sequence belongs to the class I-like SAM-binding methyltransferase superfamily. rRNA adenine N(6)-methyltransferase family. RsmA subfamily.

Its subcellular location is the cytoplasm. It carries out the reaction adenosine(1518)/adenosine(1519) in 16S rRNA + 4 S-adenosyl-L-methionine = N(6)-dimethyladenosine(1518)/N(6)-dimethyladenosine(1519) in 16S rRNA + 4 S-adenosyl-L-homocysteine + 4 H(+). In terms of biological role, specifically dimethylates two adjacent adenosines (A1518 and A1519) in the loop of a conserved hairpin near the 3'-end of 16S rRNA in the 30S particle. May play a critical role in biogenesis of 30S subunits. The protein is Ribosomal RNA small subunit methyltransferase A of Aeromonas hydrophila subsp. hydrophila (strain ATCC 7966 / DSM 30187 / BCRC 13018 / CCUG 14551 / JCM 1027 / KCTC 2358 / NCIMB 9240 / NCTC 8049).